Consider the following 209-residue polypeptide: Large ribosomal subunit protein uL3 (209 aa).

The tract at residues 122–152 (AIKRHGQSRGPMSHGSRYHRRPGSMGPVDPN) is disordered.

This sequence belongs to the universal ribosomal protein uL3 family. As to quaternary structure, part of the 50S ribosomal subunit. Forms a cluster with proteins L14 and L19. Interacts with RNA helicase CshA.

Functionally, one of the primary rRNA binding proteins, it binds directly near the 3'-end of the 23S rRNA, where it nucleates assembly of the 50S subunit. Strongly stimulates 23S rRNA precursor processing by mini-ribonuclease 3 (MrnC); 20-30% DMSO can replace L3, suggesting the protein may alter rRNA conformation. The chain is Large ribosomal subunit protein uL3 from Bacillus subtilis (strain 168).